Consider the following 255-residue polypeptide: 5-oxoprolinase subunit A (255 aa).

It belongs to the LamB/PxpA family. As to quaternary structure, forms a complex composed of PxpA, PxpB and PxpC.

The enzyme catalyses 5-oxo-L-proline + ATP + 2 H2O = L-glutamate + ADP + phosphate + H(+). Catalyzes the cleavage of 5-oxoproline to form L-glutamate coupled to the hydrolysis of ATP to ADP and inorganic phosphate. This chain is 5-oxoprolinase subunit A, found in Nitrobacter winogradskyi (strain ATCC 25391 / DSM 10237 / CIP 104748 / NCIMB 11846 / Nb-255).